A 417-amino-acid chain; its full sequence is Transmembrane protease serine 11G (417 aa).

At 1-21 (MYQPGILVRRKRVWKPWTVAL) the chain is on the cytoplasmic side. A helical; Signal-anchor for type II membrane protein transmembrane segment spans residues 22–42 (ITVALLLALAVLIGLLVYFLV). The Extracellular portion of the chain corresponds to 43-417 (YDEKTHYYQA…RDWIKSKTSI (375 aa)). An SEA domain is found at 46–165 (KTHYYQASFW…PYLREMNAAQ (120 aa)). Residue Asn-60 is glycosylated (N-linked (GlcNAc...) asparagine). Positions 186–416 (IADGKPADKA…YRDWIKSKTS (231 aa)) constitute a Peptidase S1 domain. Cys-211 and Cys-227 form a disulfide bridge. Residues His-226 and Asp-271 each act as charge relay system in the active site. 2 disulfide bridges follow: Cys-336/Cys-352 and Cys-363/Cys-392. The active-site Charge relay system is Ser-367.

It belongs to the peptidase S1 family.

The protein localises to the membrane. This chain is Transmembrane protease serine 11G (Tmprss11g), found in Mus musculus (Mouse).